The following is an 804-amino-acid chain: Phenylalanine--tRNA ligase beta subunit (804 aa).

In terms of domain architecture, tRNA-binding spans 38 to 148 (RAAFRAFTIA…ENAPVGTSFA (111 aa)). The B5 domain maps to 401 to 476 (HTARVIDFPV…RIHGINRIDP (76 aa)). Positions 454, 460, 463, and 464 each coordinate Mg(2+). The 94-residue stretch at 710-803 (SLFQSLKRDY…VAKQTGGVLR (94 aa)) folds into the FDX-ACB domain.

Belongs to the phenylalanyl-tRNA synthetase beta subunit family. Type 1 subfamily. As to quaternary structure, tetramer of two alpha and two beta subunits. Mg(2+) serves as cofactor.

The protein resides in the cytoplasm. It carries out the reaction tRNA(Phe) + L-phenylalanine + ATP = L-phenylalanyl-tRNA(Phe) + AMP + diphosphate + H(+). The chain is Phenylalanine--tRNA ligase beta subunit from Brucella suis biovar 1 (strain 1330).